Consider the following 82-residue polypeptide: Sulfur carrier protein TusA (82 aa).

Cys17 serves as the catalytic Cysteine persulfide intermediate.

Belongs to the sulfur carrier protein TusA family.

The protein resides in the cytoplasm. In terms of biological role, sulfur carrier protein which probably makes part of a sulfur-relay system. This Glaesserella parasuis serovar 5 (strain SH0165) (Haemophilus parasuis) protein is Sulfur carrier protein TusA.